An 830-amino-acid chain; its full sequence is MNYIPTQTFYGRRWRPRPAARPWPLQATPVAPVVPDFQAQQMQQLISAVNALTMRQNAIAPARPPKPKKKKTTKPKPKTQPKKINGKTQQQKKKDKQADKKKKKPGKRERMCMKIENDCIFEVKHEGKVTGYACLVGDKVMKPAHVKGVIDNADLAKLAFKKSSKYDLECAQIPVHMRSDASKYTHEKPEGHYNWHHGAVQYSGGRFTIPTGAGKPGDSGRPIFDNKGRVVAIVLGGANEGSRTALSVVTWNKDMVTRVTPEGSEEWSAPLITAMCVLANATFPCFQPPCVPCCYENNAEATLRMLEDNVDRPGYYDLLQAALTCRNGTRHRRSVSQHFNVYKATRPYIAYCADCGAGHSCHSPVAIEAVRSEATDGMLKIQFSAQIGIDKSDNHDYTKIRYADGHAIENAVRSSLKVATSGDCFVHGTMGHFILAKCPPGEFLQVSIQDTRNAVRACRIQYHHDPQPVGREKFTIRPHYGKEIPCTTYQQTTAETVEEIDMHMPPDTPDRTLLSQQSGNVKITVGGKKVKYNCTCGTGNVGTTNSDMTINTCLIEQCHVSVTDHKKWQFNSPFVPRADEPARKGKVHIPFPLDNITCRVPMAREPTVIHGKREVTLHLHPDHPTLFSYRTLGEDPQYHEEWVTAAVERTIPVPVDGMEYHWGNNDPVRLWSQLTTEGKPHGWPHQIVQYYYGLYPAATVSAVVGMSLLALISIFASCYMLVAARSKCLTPYALTPGAAVPWTLGILCCAPRAHAASVAETMAYLWDQNQALFWLEFAAPVACILIITYCLRNVLCCCKSLSFLSATEPRGHRQSLRTFDSNAERGGVPV.

The segment at 58–109 (AIAPARPPKPKKKKTTKPKPKTQPKKINGKTQQQKKKDKQADKKKKKPGKRE) is disordered. Basic residues predominate over residues 65-107 (PKPKKKKTTKPKPKTQPKKINGKTQQQKKKDKQADKKKKKPGK). Residues 94–106 (KDKQADKKKKKPG) are ribosome-binding. C119 and C134 are disulfide-bonded. A Peptidase S3 domain is found at 119 to 267 (CIFEVKHEGK…RVTPEGSEEW (149 aa)). Active-site charge relay system residues include H145, D167, and S219. N-linked (GlcNAc...) asparagine; by host glycosylation is found at N280, N327, N533, and N595. Residues 702–722 (AVVGMSLLALISIFASCYMLV) traverse the membrane as a helical segment. Residues C718, C728, C748, and C749 are each lipidated (S-palmitoyl cysteine; by host). Residues 728–748 (CLTPYALTPGAAVPWTLGILC) form a transient transmembrane before p62-6K protein processing region. Helical transmembrane passes span 771-791 (ALFW…TYCL) and 793-813 (NVLC…RGHR).

As to quaternary structure, homodimer. Homomultimer. Interacts with host karyopherin KPNA4; this interaction allows the nuclear import of the viral capsid protein. Precursor of protein E3/E2: The precursor of protein E3/E2 and E1 form a heterodimer shortly after synthesis. Interacts with host IRAK1; the interaction leads to inhibition of IRAK1-dependent signaling. In terms of assembly, processing of the precursor of protein E3/E2 into E2 and E3 results in a heterodimer of the spike glycoproteins E2 and E1. Spike at virion surface are constituted of three E2-E1 heterodimers. Interacts with 6K protein. Interacts with host MXRA8; this interaction mediates virus entry. In terms of processing, specific enzymatic cleavages in vivo yield mature proteins. Capsid protein is auto-cleaved during polyprotein translation, unmasking a signal peptide at the N-terminus of the precursor of E3/E2. The remaining polyprotein is then targeted to the host endoplasmic reticulum, where host signal peptidase cleaves it into pE2 and TF. pE2 is further processed to mature E3 and E2 by host furin in trans-Golgi vesicle.

It localises to the virion. Its subcellular location is the host cytoplasm. The protein resides in the host cell membrane. It is found in the host nucleus. The protein localises to the virion membrane. It catalyses the reaction Autocatalytic release of the core protein from the N-terminus of the togavirus structural polyprotein by hydrolysis of a -Trp-|-Ser- bond.. Functionally, forms an icosahedral capsid with a T=4 symmetry composed of 240 copies of the capsid protein surrounded by a lipid membrane through which penetrate 80 spikes composed of trimers of E1-E2 heterodimers. The capsid protein binds to the viral RNA genome at a site adjacent to a ribosome binding site for viral genome translation following genome release. Possesses a protease activity that results in its autocatalytic cleavage from the nascent structural protein. Following its self-cleavage, the capsid protein transiently associates with ribosomes, and within several minutes the protein binds to viral RNA and rapidly assembles into icosahedric core particles. The resulting nucleocapsid eventually associates with the cytoplasmic domain of the spike glycoprotein E2 at the cell membrane, leading to budding and formation of mature virions. In case of infection, new virions attach to target cells and after clathrin-mediated endocytosis their membrane fuses with the host endosomal membrane. This leads to the release of the nucleocapsid into the cytoplasm, followed by an uncoating event necessary for the genomic RNA to become accessible. The uncoating might be triggered by the interaction of capsid proteins with ribosomes. Binding of ribosomes would release the genomic RNA since the same region is genomic RNA-binding and ribosome-binding. Specifically inhibits interleukin-1 receptor-associated kinase 1/IRAK1-dependent signaling during viral entry, representing a means by which the alphaviruses may evade innate immune detection and activation prior to viral gene expression. Provides the signal sequence for p62 (E3/E2) translocation to the host endoplasmic reticulum. Mediates pH protection of E1 during secretory pathway trans- port. Its function is as follows. Plays a role in viral attachment to target host cell, by binding to the cell receptor. Synthesized as a p62 precursor which is processed by furin at the cell membrane just before virion budding, giving rise to E2-E1 heterodimer. The p62-E1 heterodimer is stable, whereas E2-E1 is unstable and dissociate at low pH. p62 is processed at the last step, presumably to avoid E1 fusion activation before its final export to cell surface. E2 C-terminus contains a transitory transmembrane that would be disrupted by palmitoylation, resulting in reorientation of the C-terminal tail from lumenal to cytoplasmic side. This step is critical since E2 C-terminus is involved in budding by interacting with capsid proteins. This release of E2 C-terminus in cytoplasm occurs lately in protein export, and precludes premature assembly of particles at the endoplasmic reticulum membrane. In terms of biological role, virion component that may play a role during viral assembly. The chain is Frameshifted structural polyprotein from Aedes (Middle-African hedgehog).